A 205-amino-acid chain; its full sequence is Recombination protein RecR (205 aa).

The C4-type zinc finger occupies 64–79 (CSRCYFITQNDLCAIC). In terms of domain architecture, Toprim spans 87-182 (RIVCVVEEPL…RVTRLARGLP (96 aa)).

The protein belongs to the RecR family.

Its function is as follows. May play a role in DNA repair. It seems to be involved in an RecBC-independent recombinational process of DNA repair. It may act with RecF and RecO. The sequence is that of Recombination protein RecR from Roseiflexus castenholzii (strain DSM 13941 / HLO8).